We begin with the raw amino-acid sequence, 333 residues long: Glycerol-3-phosphate dehydrogenase [NAD(P)+] (333 aa).

NADPH-binding residues include Trp13, Lys33, and Lys108. Sn-glycerol 3-phosphate contacts are provided by Lys108 and Gly138. Ser142 contacts NADPH. Residues Lys193, Asp246, Ser256, Arg257, and Asn258 each contribute to the sn-glycerol 3-phosphate site. Catalysis depends on Lys193, which acts as the Proton acceptor. NADPH is bound at residue Arg257. Val281 and Glu283 together coordinate NADPH.

Belongs to the NAD-dependent glycerol-3-phosphate dehydrogenase family.

The protein localises to the cytoplasm. The catalysed reaction is sn-glycerol 3-phosphate + NAD(+) = dihydroxyacetone phosphate + NADH + H(+). It catalyses the reaction sn-glycerol 3-phosphate + NADP(+) = dihydroxyacetone phosphate + NADPH + H(+). It functions in the pathway membrane lipid metabolism; glycerophospholipid metabolism. Its function is as follows. Catalyzes the reduction of the glycolytic intermediate dihydroxyacetone phosphate (DHAP) to sn-glycerol 3-phosphate (G3P), the key precursor for phospholipid synthesis. The chain is Glycerol-3-phosphate dehydrogenase [NAD(P)+] from Bifidobacterium longum (strain DJO10A).